Consider the following 206-residue polypeptide: LOB domain-containing protein 35 (206 aa).

Residues 4–105 (TCCSACKVMK…EQINSAKNEL (102 aa)) form the LOB domain. Positions 184–206 (ASTSGGTSATQKTLPFPQNHNQP) are disordered.

It belongs to the LOB domain-containing protein family.

The polypeptide is LOB domain-containing protein 35 (LBD35) (Arabidopsis thaliana (Mouse-ear cress)).